The primary structure comprises 315 residues: Probable cell division protein WhiA (315 aa).

A DNA-binding region (H-T-H motif) is located at residues 275 to 309 (TLKELGEMVSSGTVSKSGVNHRLRKIDEIADALRR).

It belongs to the WhiA family.

Functionally, involved in cell division and chromosome segregation. The sequence is that of Probable cell division protein WhiA from Lysinibacillus sphaericus (strain C3-41).